The chain runs to 170 residues: VIP peptides (170 aa).

Positions 1 to 20 (MDTRNKAQLLVLLTLLSVLF) are cleaved as a signal peptide. Positions 21 to 79 (SQTSAWPLYRAPSALRLGDRIPFEGANEPDQVSLKEDIDMLQNALAENDTPYYDVSRNA) are excised as a propeptide. Serine 76 is modified (phosphoserine). Methionine 107 is modified (methionine amide). Asparagine 152 carries the asparagine amide modification. The propeptide occupies 156–170 (SSEGESPDFPEELEK).

The protein belongs to the glucagon family.

It is found in the secreted. Its function is as follows. VIP is a neuropeptide involved in a diverse array of physiological processes through activating the PACAP subfamily of class B1 G protein-coupled receptors: VIP receptor 1 (VPR1) and VIP receptor 2 (VPR2). Abundantly expressed throughout the CNS and peripheral nervous systems where they primarily exert neuroprotective and immune modulatory roles. Also causes vasodilation, lowers arterial blood pressure, stimulates myocardial contractility, increases glycogenolysis and relaxes the smooth muscle of trachea, stomach and gall bladder. In terms of biological role, PHM-27 and PHV-42 are two bioactive forms from proteolysis of the same precursor protein, that cause vasodilation. PHM-27 is a potent agonist of the calcitonin receptor CALCR, with similar efficacy as calcitonin. This is VIP peptides from Homo sapiens (Human).